Reading from the N-terminus, the 183-residue chain is MSRSKKTRKGGENSPKQQPRVKKQDRAEVTGKRAEKGNKSGSRHNEALIQAQAPQKKAAQKKDPRHGSKKPVALALPTTTEKSATPKVKQPKLTDEQKLLKLEEDPRLNQLLDMLEEGRNLSDADQKWLDQQLNKIEALMIKLGISDELEDEAPAKSKADSDDDLFDRFESGAELLKDYQDKF.

Positions 1 to 101 (MSRSKKTRKG…KLTDEQKLLK (101 aa)) are disordered. 2 stretches are compositionally biased toward basic and acidic residues: residues 22-46 (KKQDRAEVTGKRAEKGNKSGSRHNE) and 92-101 (KLTDEQKLLK).

This sequence belongs to the YihI family. Interacts with Der.

Functionally, a GTPase-activating protein (GAP) that modifies Der/EngA GTPase function. May play a role in ribosome biogenesis. This Shewanella oneidensis (strain ATCC 700550 / JCM 31522 / CIP 106686 / LMG 19005 / NCIMB 14063 / MR-1) protein is Der GTPase-activating protein YihI.